The primary structure comprises 691 residues: Lectin-domain containing receptor kinase VI.4 (691 aa).

The N-terminal stretch at 1-19 is a signal peptide; sequence MGRAKSMVSLLLVLFLVRA. The Extracellular portion of the chain corresponds to 20–306; it reads HVATTETTTE…AKKRGYNGKV (287 aa). The segment at 26 to 273 is legume-lectin like; sequence TTTEFIFHGF…AHYVMGWSFA (248 aa). The chain crosses the membrane as a helical span at residues 307-327; it reads IALIVALSTVISIMLVLLFLF. At 328–691 the chain is on the cytoplasmic side; it reads MMYKKRMQQE…ISSTSLISGR (364 aa). Residues 363 to 641 enclose the Protein kinase domain; it reads FKENRVVGTG…LNRDEDVPEI (279 aa). Residues 369–377 and K392 each bind ATP; that span reads VGTGGFGIV. D491 functions as the Proton acceptor in the catalytic mechanism.

It in the C-terminal section; belongs to the protein kinase superfamily. Ser/Thr protein kinase family. This sequence in the N-terminal section; belongs to the leguminous lectin family.

It is found in the cell membrane. It catalyses the reaction L-seryl-[protein] + ATP = O-phospho-L-seryl-[protein] + ADP + H(+). The enzyme catalyses L-threonyl-[protein] + ATP = O-phospho-L-threonyl-[protein] + ADP + H(+). In terms of biological role, involved in negative regulation of abscisic acid response in seed germination. This is Lectin-domain containing receptor kinase VI.4 (LECRK64) from Arabidopsis thaliana (Mouse-ear cress).